The sequence spans 517 residues: MDIVGGQNLRQMWDDLAGMYGDKTALIFESCEGIVRQFSYASLNEEINRTANLFYYLGIRKGDRVALHLDNCPEFIFCWFGLAKIGAIMVPINARLLGEESAWILQNSQVSLLVTSAQFYPMYREIRQDNSTPLNHICLIGEQLPADDGVSHFSQLQARQSATLCYTPALSTDDTAEILFTSGTTSRPKGVVITHYNLRFAGYYSAWQIALRDDDVYMTVMPAFHIDCQCTAAMPAFSAGSTFVLLEKYSARAFWDQVRKYQATVTECIPMMIRTLMVQPATPTDRQHHLREVMFYLNLSAQEKDAFTERFGVRLLTSYGMTETIVGIIGDRPGDKRRWPSIGRVGFSYEAEIRDDQNRPLPAGEIGEICIKGIPGKTIFKEYYMQPEATARALEPEGWLHTGDSGYQDEDGYFYFVDRRCNMIKRGGENVSCVELENIISAHPKIQDIVVVGIKDAIRDEAIKAFIVLNEGETLSEAEFFSFCENNMAKFKVPSFMEIRTDLPRNCSGKIIKKNLK.

The protein belongs to the ATP-dependent AMP-binding enzyme family.

The catalysed reaction is 4-(trimethylamino)butanoate + ATP + CoA = 4-(trimethylamino)butanoyl-CoA + AMP + diphosphate. The enzyme catalyses crotonobetaine + ATP + CoA = crotonobetainyl-CoA + AMP + diphosphate. It carries out the reaction (R)-carnitine + ATP + CoA = (R)-carnitinyl-CoA + AMP + diphosphate. It functions in the pathway amine and polyamine metabolism; carnitine metabolism. Functionally, catalyzes the transfer of CoA to carnitine, generating the initial carnitinyl-CoA needed for the CaiB reaction cycle. Also has activity toward crotonobetaine and gamma-butyrobetaine. This Salmonella typhi protein is Crotonobetaine/carnitine--CoA ligase.